Here is a 664-residue protein sequence, read N- to C-terminus: UvrABC system protein B (664 aa).

Residues 24–182 enclose the Helicase ATP-binding domain; sequence AGLRAGYRHQ…QLIDLQFERN (159 aa). ATP is bound at residue 37–44; that stretch reads GATGTGKT. Positions 90 to 113 match the Beta-hairpin motif; it reads YYDEYTPEAYVPSKDLYIEKEASI. Positions 427–593 constitute a Helicase C-terminal domain; sequence QIDDLLGEIR…GIAKGVRDLT (167 aa). Positions 624-659 constitute a UVR domain; the sequence is LKLIKDLEKQMKQAAKALAFEKAAALRDQIVELRQA.

It belongs to the UvrB family. As to quaternary structure, forms a heterotetramer with UvrA during the search for lesions. Interacts with UvrC in an incision complex.

Its subcellular location is the cytoplasm. Its function is as follows. The UvrABC repair system catalyzes the recognition and processing of DNA lesions. A damage recognition complex composed of 2 UvrA and 2 UvrB subunits scans DNA for abnormalities. Upon binding of the UvrA(2)B(2) complex to a putative damaged site, the DNA wraps around one UvrB monomer. DNA wrap is dependent on ATP binding by UvrB and probably causes local melting of the DNA helix, facilitating insertion of UvrB beta-hairpin between the DNA strands. Then UvrB probes one DNA strand for the presence of a lesion. If a lesion is found the UvrA subunits dissociate and the UvrB-DNA preincision complex is formed. This complex is subsequently bound by UvrC and the second UvrB is released. If no lesion is found, the DNA wraps around the other UvrB subunit that will check the other stand for damage. This is UvrABC system protein B from Chloroflexus aggregans (strain MD-66 / DSM 9485).